Reading from the N-terminus, the 472-residue chain is MREIITLSFGQTAGHINADYFNSQEHYFPLATKSTSDPTVRFRRGVATDSRTETYNPRLLTWELKGGYGAFQAFNQFYTEGDKSQPQVWNEGEIKEIKEQPVDKNEYQKALDLGRENASQLNTDTTKRWTDYNRLFHHPKTRHQLDNWLFDPDTAPQGIHRGGDQKWTGFDVGVNEWEHVLNSDKEYLDSTLRSWVEECDSLGGLNVVVDDSAWAGVAAKILANYRDDFDAKGTVVTWSVEAKPEKKTRETQKNAIQTTVALSQVSSIYIPVSFPTKTPIDADFDPTSPWHQAALFGLSVYEPVQLMATQRTGGLSLDAMAALLDTTGERNIVSEVGGTLTDVDGDKSTVQYDSRLFQELFLPSRIPPKTPHVFSDLSIARLEDQDDDANSYRLNQPMPEVSSQPEFTKQFVSSKTRLAVTTKPRRTLLDMAKFVSVYERGDEREEMKQELGDMASKYEHGWEEESDDDDDY.

Residues 441–463 are compositionally biased toward basic and acidic residues; that stretch reads GDEREEMKQELGDMASKYEHGWE. A disordered region spans residues 441–472; the sequence is GDEREEMKQELGDMASKYEHGWEEESDDDDDY.

This sequence belongs to the misato family.

It is found in the mitochondrion. Involved in the partitioning of the mitochondrial organelle and mitochondrial DNA (mtDNA) inheritance. The chain is Protein DML1 (DML1) from Yarrowia lipolytica (strain CLIB 122 / E 150) (Yeast).